Reading from the N-terminus, the 544-residue chain is MTKFIFVTGGVVSSLGKGIAAASIAAILESRGLNVTMLKLDPYINVDPGTMSPFQHGEVFVTDDGAETDLDLGHYERFIDSTMTRRNSFSTGQVYENVIAKERRGDYLGGTVQVIPHITDEIKRRIHEGAAGYDVAIVEIGGTVGDIESLPFLEAIRQMRSQLGRNNTLFAHLSYVPYIAAAGEIKTKPTQHTVKEMLSIGLQPDILICRMDRTMPADERRKIALFCNVEERAIVGSYDVDSIYECPEMLHDQGIDNIITEQLQLNVQQADLTAWKKIVHAIQNPKHTVKIAMVGKYVDLTESYKSLIEALKHAGIHTETDVQITFVDSENIEKNKGDVSMLKDMDAILVPGGFGSRGVEGKIAAVRYARENNVPYLGICLGMQIALIEYARDVAGLKGANSTEFDLKCAAPVVALIDEWQTADGSVETRDESTDLGGTMRLGAQEVELKAGSLAAKIYGSGHIRERHRHRYEVNNNYVPTLEQAGLVIGGVSAGRERLVETIELPNHPWFFACQFHPEFTSNPRKGHPLFTAFVKAALNNKKA.

Residues 1–265 (MTKFIFVTGG…DNIITEQLQL (265 aa)) form an amidoligase domain region. Serine 13 lines the CTP pocket. Residue serine 13 participates in UTP binding. Residues 14-19 (SLGKGI) and aspartate 71 each bind ATP. Residues aspartate 71 and glutamate 139 each contribute to the Mg(2+) site. CTP contacts are provided by residues 146–148 (DIE), 186–191 (KTKPTQ), and lysine 222. Residues 186–191 (KTKPTQ) and lysine 222 contribute to the UTP site. The Glutamine amidotransferase type-1 domain occupies 290–544 (KIAMVGKYVD…VKAALNNKKA (255 aa)). Glycine 353 is a binding site for L-glutamine. Residue cysteine 380 is the Nucleophile; for glutamine hydrolysis of the active site. Residues 381–384 (LGMQ), glutamate 404, and arginine 471 contribute to the L-glutamine site. Residues histidine 517 and glutamate 519 contribute to the active site.

This sequence belongs to the CTP synthase family. Homotetramer.

It carries out the reaction UTP + L-glutamine + ATP + H2O = CTP + L-glutamate + ADP + phosphate + 2 H(+). The catalysed reaction is L-glutamine + H2O = L-glutamate + NH4(+). It catalyses the reaction UTP + NH4(+) + ATP = CTP + ADP + phosphate + 2 H(+). The protein operates within pyrimidine metabolism; CTP biosynthesis via de novo pathway; CTP from UDP: step 2/2. Its activity is regulated as follows. Allosterically activated by GTP, when glutamine is the substrate; GTP has no effect on the reaction when ammonia is the substrate. The allosteric effector GTP functions by stabilizing the protein conformation that binds the tetrahedral intermediate(s) formed during glutamine hydrolysis. Inhibited by the product CTP, via allosteric rather than competitive inhibition. Functionally, catalyzes the ATP-dependent amination of UTP to CTP with either L-glutamine or ammonia as the source of nitrogen. Regulates intracellular CTP levels through interactions with the four ribonucleotide triphosphates. The sequence is that of CTP synthase from Neisseria meningitidis serogroup B (strain ATCC BAA-335 / MC58).